A 382-amino-acid polypeptide reads, in one-letter code: D-galactonate dehydratase (382 aa).

D183 contacts Mg(2+). H185 acts as the Proton donor in catalysis. Positions 209 and 235 each coordinate Mg(2+). The Proton acceptor role is filled by H285.

The protein belongs to the mandelate racemase/muconate lactonizing enzyme family. GalD subfamily. Mg(2+) is required as a cofactor.

It catalyses the reaction D-galactonate = 2-dehydro-3-deoxy-D-galactonate + H2O. Its pathway is carbohydrate acid metabolism; D-galactonate degradation; D-glyceraldehyde 3-phosphate and pyruvate from D-galactonate: step 1/3. Catalyzes the dehydration of D-galactonate to 2-keto-3-deoxy-D-galactonate. In Escherichia coli (strain 55989 / EAEC), this protein is D-galactonate dehydratase.